The sequence spans 518 residues: Macrophage receptor MARCO (518 aa).

Topologically, residues 1-48 (MGSKELLKEEDFLGSTEDRADFDQAMFPVMETFEINDPVPKKRNGGTF) are cytoplasmic. A helical; Signal-anchor for type II membrane protein transmembrane segment spans residues 49–69 (CMAVMAIHLILLTAGTALLLI). Residues 70 to 518 (QVLNLQEQLQ…HNEDAGVECS (449 aa)) are Extracellular-facing. Residues Asn-87 and Asn-138 are each glycosylated (N-linked (GlcNAc...) asparagine). Residues 147-426 (QIKGERGSPG…GESFQRVRIM (280 aa)) form a disordered region. A Collagen-like domain is found at 149–418 (KGERGSPGPK…QKGEKGQKGE (270 aa)). Low complexity predominate over residues 154 to 163 (SPGPKGAPGA). The segment covering 239–250 (KGEHGTKGDKGD) has biased composition (basic and acidic residues). 2 stretches are compositionally biased toward low complexity: residues 293–314 (PGVK…QGAP) and 325–344 (RTGL…PGIA). Basic and acidic residues predominate over residues 410 to 421 (KGEKGQKGESFQ). An SRCR domain is found at 423–518 (VRIMGGTNRG…HNEDAGVECS (96 aa)). 3 disulfides stabilise this stretch: Cys-446-Cys-507, Cys-459-Cys-517, and Cys-487-Cys-497.

Homotrimer; disulfide-linked. Trimers may assemble in larger oligomers thus resulting in the creation of a large surface capable of interacting with very large ligands. In terms of processing, N-glycosylated. As to expression, expressed in subpopulations of macrophages in the spleen and the medullary cord of lymph nodes (at protein level).

It localises to the cell membrane. Functionally, pattern recognition receptor (PRR) which binds Gram-positive and Gram-negative bacteria. Also plays a role in binding of unopsonized particles by alveolar macrophages. Binds to the secretoglobin SCGB3A2. This is Macrophage receptor MARCO (Marco) from Mus musculus (Mouse).